We begin with the raw amino-acid sequence, 1076 residues long: DNA-directed RNA polymerase subunit beta (1076 aa).

It belongs to the RNA polymerase beta chain family. As to quaternary structure, in plastids the minimal PEP RNA polymerase catalytic core is composed of four subunits: alpha, beta, beta', and beta''. When a (nuclear-encoded) sigma factor is associated with the core the holoenzyme is formed, which can initiate transcription.

The protein resides in the plastid. The protein localises to the chloroplast. It carries out the reaction RNA(n) + a ribonucleoside 5'-triphosphate = RNA(n+1) + diphosphate. In terms of biological role, DNA-dependent RNA polymerase catalyzes the transcription of DNA into RNA using the four ribonucleoside triphosphates as substrates. In Agrostis stolonifera (Creeping bentgrass), this protein is DNA-directed RNA polymerase subunit beta.